The primary structure comprises 278 residues: Tryptophan synthase alpha chain (278 aa).

Active-site proton acceptor residues include E50 and D61.

This sequence belongs to the TrpA family. In terms of assembly, tetramer of two alpha and two beta chains.

It catalyses the reaction (1S,2R)-1-C-(indol-3-yl)glycerol 3-phosphate + L-serine = D-glyceraldehyde 3-phosphate + L-tryptophan + H2O. The protein operates within amino-acid biosynthesis; L-tryptophan biosynthesis; L-tryptophan from chorismate: step 5/5. The alpha subunit is responsible for the aldol cleavage of indoleglycerol phosphate to indole and glyceraldehyde 3-phosphate. This Methylorubrum populi (strain ATCC BAA-705 / NCIMB 13946 / BJ001) (Methylobacterium populi) protein is Tryptophan synthase alpha chain.